We begin with the raw amino-acid sequence, 72 residues long: MKADIHPNYPEVAVTCSCGNKFETRSTFGKALAIDVCNECHPFYTGKQKTLDTGGRVQKFADRFGAFGAKKA.

Residues Cys16, Cys18, Cys37, and Cys40 each coordinate Zn(2+).

The protein belongs to the bacterial ribosomal protein bL31 family. Type A subfamily. In terms of assembly, part of the 50S ribosomal subunit. The cofactor is Zn(2+).

Functionally, binds the 23S rRNA. This chain is Large ribosomal subunit protein bL31, found in Pseudomonas fluorescens (strain Pf0-1).